The following is a 773-amino-acid chain: DNA gyrase subunit B (773 aa).

A Toprim domain is found at 416–530; the sequence is SEIFLVEGDS…QGHVYIAQAP (115 aa). Residues glutamate 422, aspartate 495, and aspartate 497 each contribute to the Mg(2+) site.

The protein belongs to the type II topoisomerase GyrB family. As to quaternary structure, heterotetramer, composed of two GyrA and two GyrB chains. In the heterotetramer, GyrA contains the active site tyrosine that forms a transient covalent intermediate with DNA, while GyrB binds cofactors and catalyzes ATP hydrolysis. Requires Mg(2+) as cofactor. Mn(2+) serves as cofactor. Ca(2+) is required as a cofactor.

The protein resides in the cytoplasm. The catalysed reaction is ATP-dependent breakage, passage and rejoining of double-stranded DNA.. In terms of biological role, a type II topoisomerase that negatively supercoils closed circular double-stranded (ds) DNA in an ATP-dependent manner to modulate DNA topology and maintain chromosomes in an underwound state. Negative supercoiling favors strand separation, and DNA replication, transcription, recombination and repair, all of which involve strand separation. Also able to catalyze the interconversion of other topological isomers of dsDNA rings, including catenanes and knotted rings. Type II topoisomerases break and join 2 DNA strands simultaneously in an ATP-dependent manner. In Helicobacter pylori (strain ATCC 700392 / 26695) (Campylobacter pylori), this protein is DNA gyrase subunit B.